A 147-amino-acid polypeptide reads, in one-letter code: Ribonuclease H (147 aa).

The 143-residue stretch at 3–145 folds into the RNase H type-1 domain; it reads TEDRVEIYTD…ADQLANKGVE (143 aa). Mg(2+) is bound by residues D12, E50, D72, and D137.

It belongs to the RNase H family. Monomer. Mg(2+) serves as cofactor.

Its subcellular location is the cytoplasm. The catalysed reaction is Endonucleolytic cleavage to 5'-phosphomonoester.. Functionally, endonuclease that specifically degrades the RNA of RNA-DNA hybrids. The chain is Ribonuclease H from Chromobacterium violaceum (strain ATCC 12472 / DSM 30191 / JCM 1249 / CCUG 213 / NBRC 12614 / NCIMB 9131 / NCTC 9757 / MK).